Here is a 722-residue protein sequence, read N- to C-terminus: Protein HAPLESS 2-A (722 aa).

The first 24 residues, Met-1–Gly-24, serve as a signal peptide directing secretion. The Extracellular portion of the chain corresponds to Thr-25–Tyr-552. Intrachain disulfides connect Cys-36–Cys-48, Cys-129–Cys-159, Cys-141–Cys-188, Cys-160–Cys-315, Cys-162–Cys-171, Cys-298–Cys-322, and Cys-435–Cys-473. Residues Val-553–Leu-573 form a helical membrane-spanning segment. Over Leu-574 to Val-722 the chain is Cytoplasmic. The span at Arg-598–Pro-641 shows a compositional bias: basic residues. 2 disordered regions span residues Arg-598–His-665 and Arg-680–Val-722. Positions Val-646 to Arg-662 are enriched in basic and acidic residues. Residues Arg-701 to His-711 show a composition bias toward basic residues. Over residues Gly-712–Val-722 the composition is skewed to basic and acidic residues.

The protein belongs to the HAP2/GCS1 family.

The protein localises to the endoplasmic reticulum membrane. The protein resides in the cell membrane. Its function is as follows. Required for male fertility. Plays a role in pollen tube guidance and successful gamete attachment. Essential for the fusion of gametes during double fertilization, where one male gamete fuses with the egg to produce a zygote, and another male gamete fuses with the central cell to produce the endosperm. Mediates the fusion of cell membranes. Not required for pollen tube outgrowth. This is Protein HAPLESS 2-A (HAP2A) from Oryza sativa subsp. japonica (Rice).